Reading from the N-terminus, the 93-residue chain is Alpha-defensin 26 (93 aa).

A signal peptide spans 1 to 19 (MKTLVLLSALFLLAFQVQA). Residues 20–58 (DPIQNTDEETNTEVQPQEEDQAVSVSFGNPEGSDLQEES) constitute a propeptide that is removed on maturation. Residues 24-55 (NTDEETNTEVQPQEEDQAVSVSFGNPEGSDLQ) are disordered. A compositionally biased stretch (acidic residues) spans 25-40 (TDEETNTEVQPQEEDQ). Intrachain disulfides connect C64/C92, C66/C81, and C71/C91.

Belongs to the alpha-defensin family.

Its subcellular location is the secreted. May have microbicidal activities. The polypeptide is Alpha-defensin 26 (Defa26) (Mus musculus (Mouse)).